The chain runs to 389 residues: Succinate--CoA ligase [ADP-forming] subunit beta (389 aa).

Residues 9–236 enclose the ATP-grasp domain; it reads RDLFEKHGVP…KTTADPLEEK (228 aa). Residues K45, 52–54, A94, and E99 each bind ATP; that span reads GRG. 2 residues coordinate Mg(2+): N191 and D205. Substrate is bound by residues N256 and 318–320; that span reads GIT.

The protein belongs to the succinate/malate CoA ligase beta subunit family. As to quaternary structure, heterotetramer of two alpha and two beta subunits. The cofactor is Mg(2+).

It catalyses the reaction succinate + ATP + CoA = succinyl-CoA + ADP + phosphate. It carries out the reaction GTP + succinate + CoA = succinyl-CoA + GDP + phosphate. The protein operates within carbohydrate metabolism; tricarboxylic acid cycle; succinate from succinyl-CoA (ligase route): step 1/1. Functionally, succinyl-CoA synthetase functions in the citric acid cycle (TCA), coupling the hydrolysis of succinyl-CoA to the synthesis of either ATP or GTP and thus represents the only step of substrate-level phosphorylation in the TCA. The beta subunit provides nucleotide specificity of the enzyme and binds the substrate succinate, while the binding sites for coenzyme A and phosphate are found in the alpha subunit. The chain is Succinate--CoA ligase [ADP-forming] subunit beta from Kocuria rhizophila (strain ATCC 9341 / DSM 348 / NBRC 103217 / DC2201).